Here is a 1404-residue protein sequence, read N- to C-terminus: DNA-directed RNA polymerase subunit beta' (1404 aa).

Zn(2+) contacts are provided by Cys-72, Cys-74, Cys-87, and Cys-90. Mg(2+) is bound by residues Asp-463, Asp-465, and Asp-467. The Zn(2+) site is built by Cys-811, Cys-885, Cys-892, and Cys-895.

The protein belongs to the RNA polymerase beta' chain family. In terms of assembly, the RNAP catalytic core consists of 2 alpha, 1 beta, 1 beta' and 1 omega subunit. When a sigma factor is associated with the core the holoenzyme is formed, which can initiate transcription. Mg(2+) is required as a cofactor. The cofactor is Zn(2+).

The enzyme catalyses RNA(n) + a ribonucleoside 5'-triphosphate = RNA(n+1) + diphosphate. In terms of biological role, DNA-dependent RNA polymerase catalyzes the transcription of DNA into RNA using the four ribonucleoside triphosphates as substrates. The protein is DNA-directed RNA polymerase subunit beta' of Jannaschia sp. (strain CCS1).